A 404-amino-acid chain; its full sequence is Acetate kinase (404 aa).

Asn-9 provides a ligand contact to Mg(2+). Lys-16 provides a ligand contact to ATP. Arg-100 is a substrate binding site. The active-site Proton donor/acceptor is Asp-157. Residues His-215–Gly-219, Asp-290–Arg-292, and Gly-335–Asn-339 contribute to the ATP site. Mg(2+) is bound at residue Glu-386.

This sequence belongs to the acetokinase family. Homodimer. The cofactor is Mg(2+). Requires Mn(2+) as cofactor.

Its subcellular location is the cytoplasm. The enzyme catalyses acetate + ATP = acetyl phosphate + ADP. The protein operates within metabolic intermediate biosynthesis; acetyl-CoA biosynthesis; acetyl-CoA from acetate: step 1/2. In terms of biological role, catalyzes the formation of acetyl phosphate from acetate and ATP. Can also catalyze the reverse reaction. This chain is Acetate kinase, found in Methylocella silvestris (strain DSM 15510 / CIP 108128 / LMG 27833 / NCIMB 13906 / BL2).